Consider the following 204-residue polypeptide: FMN-dependent NADH:quinone oxidoreductase (204 aa).

Residues Ser-9, 15-17 (SVS), 95-98 (MYNF), and 139-142 (SRGG) contribute to the FMN site.

Belongs to the azoreductase type 1 family. In terms of assembly, homodimer. The cofactor is FMN.

It catalyses the reaction 2 a quinone + NADH + H(+) = 2 a 1,4-benzosemiquinone + NAD(+). The enzyme catalyses N,N-dimethyl-1,4-phenylenediamine + anthranilate + 2 NAD(+) = 2-(4-dimethylaminophenyl)diazenylbenzoate + 2 NADH + 2 H(+). Its function is as follows. Quinone reductase that provides resistance to thiol-specific stress caused by electrophilic quinones. Also exhibits azoreductase activity. Catalyzes the reductive cleavage of the azo bond in aromatic azo compounds to the corresponding amines. The sequence is that of FMN-dependent NADH:quinone oxidoreductase from Methylocella silvestris (strain DSM 15510 / CIP 108128 / LMG 27833 / NCIMB 13906 / BL2).